A 143-amino-acid chain; its full sequence is MDSNSNQKPKIGVLLVGHGSRLPYGEEVINGIADIYRQEADHPVAVGFMNMSRPSIPEAINELAAMGVEKIIVTPVFLAHGVHTKHDIPHILGLDNGAEGHHHHEHEHEHEEFEFDGEIVYTEPLGADPRIAEIIRDRVKSAI.

His18 (proton acceptor) is an active-site residue. His18 contributes to the Co(2+) binding site. His18 contributes to the Ni(2+) binding site. Residues Arg53 and 78–83 (LAHGVH) each bind substrate. Co(2+) is bound at residue His83. A Ni(2+)-binding site is contributed by His83.

It belongs to the CbiX family. CbiXS subfamily. In terms of assembly, homotetramer; dimer of dimers.

It carries out the reaction Co-sirohydrochlorin + 2 H(+) = sirohydrochlorin + Co(2+). The catalysed reaction is Ni-sirohydrochlorin + 2 H(+) = sirohydrochlorin + Ni(2+). Its pathway is cofactor biosynthesis; adenosylcobalamin biosynthesis; cob(II)yrinate a,c-diamide from sirohydrochlorin (anaerobic route): step 1/10. Functionally, catalyzes the insertion of Co(2+) into sirohydrochlorin as part of the anaerobic pathway to cobalamin biosynthesis. Involved in the biosynthesis of the unique nickel-containing tetrapyrrole coenzyme F430, the prosthetic group of methyl-coenzyme M reductase (MCR), which plays a key role in methanogenesis and anaerobic methane oxidation (Potential). Catalyzes the insertion of Ni(2+) into sirohydrochlorin to yield Ni-sirohydrochlorin (Potential). This chain is Sirohydrochlorin cobaltochelatase, found in Methanothermobacter thermautotrophicus (strain ATCC 29096 / DSM 1053 / JCM 10044 / NBRC 100330 / Delta H) (Methanobacterium thermoautotrophicum).